The chain runs to 410 residues: Interleukin-1 receptor type 2 (410 aa).

The signal sequence occupies residues methionine 1 to alanine 13. At phenylalanine 14–glutamate 355 the chain is on the extracellular side. Ig-like C2-type domains follow at residues proline 35 to lysine 136, proline 146 to glutamate 237, and proline 249 to serine 357. Disulfide bonds link cysteine 42–cysteine 128, cysteine 64–cysteine 120, and cysteine 164–cysteine 219. Asparagine 124, asparagine 208, asparagine 231, and asparagine 289 each carry an N-linked (GlcNAc...) asparagine glycan. A disulfide bridge links cysteine 270 with cysteine 338. A helical membrane pass occupies residues valine 356 to methionine 381. The Cytoplasmic portion of the chain corresponds to arginine 382 to asparagine 410.

This sequence belongs to the interleukin-1 receptor family. Associates with IL1RAP to form a non-signaling interleukin-1 receptor complex. A soluble form (sIL1R2) can also be produced by proteolytic cleavage at the cell surface (shedding) involving a metalloproteinase. Strongly expressed in B-cells, with levels 21 times higher than IL1R1. In T-cells expressed 5 times more compared with IL1R1.

The protein localises to the membrane. It localises to the cell membrane. It is found in the secreted. Non-signaling receptor for IL1A, IL1B and IL1RN. Reduces IL1B activities. Serves as a decoy receptor by competitive binding to IL1B and preventing its binding to IL1R1. Also modulates cellular response through non-signaling association with IL1RAP after binding to IL1B. IL1R2 (membrane and secreted forms) preferentially binds IL1B and poorly IL1A and IL1RN. The secreted IL1R2 recruits secreted IL1RAP with high affinity; this complex formation may be the dominant mechanism for neutralization of IL1B by secreted/soluble receptors. The protein is Interleukin-1 receptor type 2 (Il1r2) of Mus musculus (Mouse).